The following is a 1106-amino-acid chain: Platelet-derived growth factor receptor beta (1106 aa).

An N-terminal signal peptide occupies residues 1–32 (MRLPGAMPALALKGELLLLSLLLLLEPQISQG). Ig-like C2-type domains lie at 33–120 (LVVT…YIFV), 129–210 (PNDA…YRLQ), 214–309 (INVS…INIT), 331–403 (HRSR…HEDA), and 416–524 (PVRV…VIVV). Residues 33–532 (LVVTPPGPEL…VVPHSLPFKV (500 aa)) are Extracellular-facing. N-linked (GlcNAc...) asparagine glycans are attached at residues N45, N89, and N103. Residues C54 and C100 are joined by a disulfide bond. A disulfide bridge connects residues C149 and C190. N-linked (GlcNAc...) asparagine glycans are attached at residues N215 and N230. The cysteines at positions 235 and 291 are disulfide-linked. Residues N292, N307, N354, N371, N468, and N479 are each glycosylated (N-linked (GlcNAc...) asparagine). C436 and C508 are disulfide-bonded. A helical transmembrane segment spans residues 533–553 (VVISAILALVVLTIISLIILI). Topologically, residues 554–1106 (MLWQKKPRYE…PRAEAEDSFL (553 aa)) are cytoplasmic. 3 positions are modified to phosphotyrosine; by autocatalysis: Y562, Y579, and Y581. The 363-residue stretch at 600–962 (LVLGRTLGSG…QLVLLLERLL (363 aa)) folds into the Protein kinase domain. Residues 606–614 (LGSGAFGQV) and K634 contribute to the ATP site. Y686 is subject to Phosphotyrosine; by ABL1 and ABL2. Phosphotyrosine; by autocatalysis is present on residues Y716, Y740, Y751, Y763, Y771, Y775, and Y778. D826 acts as the Proton acceptor in catalysis. Phosphotyrosine; by autocatalysis is present on Y857. Residues Y934 and Y970 each carry the phosphotyrosine; by ABL1 and ABL2 modification. 2 positions are modified to phosphotyrosine; by autocatalysis: Y1009 and Y1021. A disordered region spans residues 1019–1106 (NDYIIPLPDP…PRAEAEDSFL (88 aa)). Residues 1043 to 1060 (SLASSTLNEVNTSSTISC) show a composition bias toward polar residues. A compositionally biased stretch (acidic residues) spans 1066 to 1088 (PQDEPEPEPQLELQVEPEPELEQ).

Belongs to the protein kinase superfamily. Tyr protein kinase family. CSF-1/PDGF receptor subfamily. In terms of assembly, interacts with homodimeric PDGFB and PDGFD, and with heterodimers formed by PDGFA and PDGFB. May also interact with homodimeric PDGFC. Monomer in the absence of bound ligand. Interaction with homodimeric PDGFB, heterodimers formed by PDGFA and PDGFB or homodimeric PDGFD, leads to receptor dimerization, where both PDGFRA homodimers and heterodimers with PDGFRB are observed. Interacts with SH2B2/APS. Interacts directly (tyrosine phosphorylated) with SHB. Interacts (tyrosine phosphorylated) with PIK3R1 and RASA1. Interacts (tyrosine phosphorylated) with CBL. Interacts (tyrosine phosphorylated) with SRC and SRC family kinases. Interacts (tyrosine phosphorylated) with PIK3C2B, maybe indirectly. Interacts (tyrosine phosphorylated) with SHC1, GRB7, GRB10 and NCK1. Interaction with GRB2 is mediated by SHC1. Interacts (via C-terminus) with NHERF1. Post-translationally, autophosphorylated on tyrosine residues upon ligand binding. Autophosphorylation occurs in trans, i.e. one subunit of the dimeric receptor phosphorylates tyrosine residues on the other subunit. Phosphorylation at Tyr-579, and to a lesser degree, at Tyr-581, is important for interaction with SRC family kinases. Phosphorylation at Tyr-740 and Tyr-751 is important for interaction with PIK3R1. Phosphorylation at Tyr-751 is important for interaction with NCK1. Phosphorylation at Tyr-771 and Tyr-857 is important for interaction with RASA1/GAP. Phosphorylation at Tyr-857 is important for efficient phosphorylation of PLCG1 and PTPN11, resulting in increased phosphorylation of AKT1, MAPK1/ERK2 and/or MAPK3/ERK1, PDCD6IP/ALIX and STAM, and in increased cell proliferation. Phosphorylation at Tyr-1009 is important for interaction with PTPN11. Phosphorylation at Tyr-1009 and Tyr-1021 is important for interaction with PLCG1. Phosphorylation at Tyr-1021 is important for interaction with CBL; PLCG1 and CBL compete for the same binding site. Dephosphorylated by PTPRJ at Tyr-751, Tyr-857, Tyr-1009 and Tyr-1021. Dephosphorylated by PTPN2 at Tyr-579 and Tyr-1021. In terms of processing, N-glycosylated. Ubiquitinated. After autophosphorylation, the receptor is polyubiquitinated, leading to its degradation.

It is found in the cell membrane. Its subcellular location is the cytoplasmic vesicle. The protein localises to the lysosome lumen. The catalysed reaction is L-tyrosyl-[protein] + ATP = O-phospho-L-tyrosyl-[protein] + ADP + H(+). With respect to regulation, present in an inactive conformation in the absence of bound ligand. Binding of PDGFB and/or PDGFD leads to dimerization and activation by autophosphorylation on tyrosine residues. Inhibited by imatinib. Its function is as follows. Tyrosine-protein kinase that acts as a cell-surface receptor for homodimeric PDGFB and PDGFD and for heterodimers formed by PDGFA and PDGFB, and plays an essential role in the regulation of embryonic development, cell proliferation, survival, differentiation, chemotaxis and migration. Plays an essential role in blood vessel development by promoting proliferation, migration and recruitment of pericytes and smooth muscle cells to endothelial cells. Plays a role in the migration of vascular smooth muscle cells and the formation of neointima at vascular injury sites. Required for normal development of the cardiovascular system. Required for normal recruitment of pericytes (mesangial cells) in the kidney glomerulus, and for normal formation of a branched network of capillaries in kidney glomeruli. Promotes rearrangement of the actin cytoskeleton and the formation of membrane ruffles. Binding of its cognate ligands - homodimeric PDGFB, heterodimers formed by PDGFA and PDGFB or homodimeric PDGFD -leads to the activation of several signaling cascades; the response depends on the nature of the bound ligand and is modulated by the formation of heterodimers between PDGFRA and PDGFRB. Phosphorylates PLCG1, PIK3R1, PTPN11, RASA1/GAP, CBL, SHC1 and NCK1. Activation of PLCG1 leads to the production of the cellular signaling molecules diacylglycerol and inositol 1,4,5-trisphosphate, mobilization of cytosolic Ca(2+) and the activation of protein kinase C. Phosphorylation of PIK3R1, the regulatory subunit of phosphatidylinositol 3-kinase, leads to the activation of the AKT1 signaling pathway. Phosphorylation of SHC1, or of the C-terminus of PTPN11, creates a binding site for GRB2, resulting in the activation of HRAS, RAF1 and down-stream MAP kinases, including MAPK1/ERK2 and/or MAPK3/ERK1. Promotes phosphorylation and activation of SRC family kinases. Promotes phosphorylation of PDCD6IP/ALIX and STAM. Receptor signaling is down-regulated by protein phosphatases that dephosphorylate the receptor and its down-stream effectors, and by rapid internalization of the activated receptor. This chain is Platelet-derived growth factor receptor beta (PDGFRB), found in Homo sapiens (Human).